Here is a 142-residue protein sequence, read N- to C-terminus: Large ribosomal subunit protein uL11 (142 aa).

This sequence belongs to the universal ribosomal protein uL11 family. Part of the ribosomal stalk of the 50S ribosomal subunit. Interacts with L10 and the large rRNA to form the base of the stalk. L10 forms an elongated spine to which L12 dimers bind in a sequential fashion forming a multimeric L10(L12)X complex. In terms of processing, one or more lysine residues are methylated.

Forms part of the ribosomal stalk which helps the ribosome interact with GTP-bound translation factors. The protein is Large ribosomal subunit protein uL11 of Brucella abortus (strain S19).